The following is a 734-amino-acid chain: Photosystem I P700 chlorophyll a apoprotein A2 (734 aa).

The next 8 membrane-spanning stretches (helical) occupy residues 46–69 (IFAS…FHVA), 135–158 (LYTG…LHLQ), 175–199 (LNHH…HVAI), 273–291 (IAHH…GHMY), 330–353 (LHFQ…QHMY), 369–395 (AALY…IFFI), 417–439 (AIIS…LYVH), and 517–535 (FLVH…LILV). Residues Cys-559 and Cys-568 each coordinate [4Fe-4S] cluster. The next 2 helical transmembrane spans lie at 575-596 (AFYL…YWHW) and 643-665 (LSVW…MFLI). The chlorophyll a site is built by His-654, Met-662, and Tyr-670. A phylloquinone-binding site is contributed by Trp-671. Residues 707–727 (LVGLAHFSVGYIFTYAAFLIA) traverse the membrane as a helical segment.

Belongs to the PsaA/PsaB family. In terms of assembly, the PsaA/B heterodimer binds the P700 chlorophyll special pair and subsequent electron acceptors. PSI consists of a core antenna complex that captures photons, and an electron transfer chain that converts photonic excitation into a charge separation. The eukaryotic PSI reaction center is composed of at least 11 subunits. P700 is a chlorophyll a/chlorophyll a' dimer, A0 is one or more chlorophyll a, A1 is one or both phylloquinones and FX is a shared 4Fe-4S iron-sulfur center. is required as a cofactor.

It is found in the plastid. The protein resides in the chloroplast thylakoid membrane. The catalysed reaction is reduced [plastocyanin] + hnu + oxidized [2Fe-2S]-[ferredoxin] = oxidized [plastocyanin] + reduced [2Fe-2S]-[ferredoxin]. Functionally, psaA and PsaB bind P700, the primary electron donor of photosystem I (PSI), as well as the electron acceptors A0, A1 and FX. PSI is a plastocyanin-ferredoxin oxidoreductase, converting photonic excitation into a charge separation, which transfers an electron from the donor P700 chlorophyll pair to the spectroscopically characterized acceptors A0, A1, FX, FA and FB in turn. Oxidized P700 is reduced on the lumenal side of the thylakoid membrane by plastocyanin. The sequence is that of Photosystem I P700 chlorophyll a apoprotein A2 from Coffea arabica (Arabian coffee).